The sequence spans 643 residues: Threonine--tRNA ligase (643 aa).

Residues 1–61 (MPIITLPDGA…SVNANINIIT (61 aa)) form the TGS domain. A catalytic region spans residues 242-533 (DHRKIGKKLD…LIEEYEGKFP (292 aa)). Cys333, His384, and His510 together coordinate Zn(2+).

It belongs to the class-II aminoacyl-tRNA synthetase family. In terms of assembly, homodimer. Requires Zn(2+) as cofactor.

Its subcellular location is the cytoplasm. It carries out the reaction tRNA(Thr) + L-threonine + ATP = L-threonyl-tRNA(Thr) + AMP + diphosphate + H(+). In terms of biological role, catalyzes the attachment of threonine to tRNA(Thr) in a two-step reaction: L-threonine is first activated by ATP to form Thr-AMP and then transferred to the acceptor end of tRNA(Thr). Also edits incorrectly charged L-seryl-tRNA(Thr). The polypeptide is Threonine--tRNA ligase (Prochlorococcus marinus (strain SARG / CCMP1375 / SS120)).